Here is a 365-residue protein sequence, read N- to C-terminus: tRNA N6-adenosine threonylcarbamoyltransferase (365 aa).

2 residues coordinate Fe cation: H119 and H123. Substrate contacts are provided by residues 141 to 145, D174, G187, and N288; that span reads LVSGG. Residue D316 coordinates Fe cation.

This sequence belongs to the KAE1 / TsaD family. Fe(2+) is required as a cofactor.

The protein resides in the cytoplasm. It carries out the reaction L-threonylcarbamoyladenylate + adenosine(37) in tRNA = N(6)-L-threonylcarbamoyladenosine(37) in tRNA + AMP + H(+). Required for the formation of a threonylcarbamoyl group on adenosine at position 37 (t(6)A37) in tRNAs that read codons beginning with adenine. Is involved in the transfer of the threonylcarbamoyl moiety of threonylcarbamoyl-AMP (TC-AMP) to the N6 group of A37, together with TsaE and TsaB. TsaD likely plays a direct catalytic role in this reaction. The chain is tRNA N6-adenosine threonylcarbamoyltransferase from Agrobacterium fabrum (strain C58 / ATCC 33970) (Agrobacterium tumefaciens (strain C58)).